A 269-amino-acid chain; its full sequence is Bis(5'-nucleosyl)-tetraphosphatase, symmetrical (269 aa).

It belongs to the Ap4A hydrolase family.

The enzyme catalyses P(1),P(4)-bis(5'-adenosyl) tetraphosphate + H2O = 2 ADP + 2 H(+). In terms of biological role, hydrolyzes diadenosine 5',5'''-P1,P4-tetraphosphate to yield ADP. The protein is Bis(5'-nucleosyl)-tetraphosphatase, symmetrical of Vibrio vulnificus (strain YJ016).